We begin with the raw amino-acid sequence, 661 residues long: Ecdysteroid-phosphate phosphatase (661 aa).

In terms of domain architecture, UBA spans 16 to 57 (KQDVSPLQILLQMGFRRQRALKALAATGNRSVQLASDWLLTH). The 66-residue stretch at 235–300 (ANHQVYKVTQ…PAVYTRRTAE (66 aa)) folds into the SH3 domain. The active site involves Arg409. His410 functions as the Tele-phosphohistidine intermediate in the catalytic mechanism. His590 is a catalytic residue.

As to quaternary structure, homodimer. Detected in non-diapause eggs, with highest expression between 2 and 5 days after oviposition. Not detected in other tissues tested.

The protein resides in the cytoplasm. The protein localises to the cytosol. The enzyme catalyses ecdysone 22-phosphate + H2O = ecdysone + phosphate. It carries out the reaction 20-hydroxyecdysone 22-phosphate + H2O = 20-hydroxyecdysone + phosphate. It catalyses the reaction 2-deoxyecdysone 22-phosphate + H2O = 2-deoxyecdysone + phosphate. The catalysed reaction is O-phospho-L-tyrosyl-[protein] + H2O = L-tyrosyl-[protein] + phosphate. Its activity is regulated as follows. Competitively inhibited by 4-nitrophenyl phosphate (para-nitrophenylphosphate, pNPP). Also inhibited by tungstate, vanadate, and phosphate. In terms of biological role, steroid phosphatase which catalyzes the conversion of inactive phosphorylated ecdysteroids into their active forms. Shows high activity towards ecdysone 22-phosphate (E22P). Has lower activity towards other ecdysteriod phosphates including 20-hydroxyecdysone 22-phosphate (20E22P) and 2-deoxyecdysone 22-phosphate (2dE22P). Also has protein tyrosine phosphatase activity. The sequence is that of Ecdysteroid-phosphate phosphatase from Bombyx mori (Silk moth).